A 293-amino-acid chain; its full sequence is Phosphoribosylaminoimidazole-succinocarboxamide synthase (293 aa).

The protein belongs to the SAICAR synthetase family.

The catalysed reaction is 5-amino-1-(5-phospho-D-ribosyl)imidazole-4-carboxylate + L-aspartate + ATP = (2S)-2-[5-amino-1-(5-phospho-beta-D-ribosyl)imidazole-4-carboxamido]succinate + ADP + phosphate + 2 H(+). It participates in purine metabolism; IMP biosynthesis via de novo pathway; 5-amino-1-(5-phospho-D-ribosyl)imidazole-4-carboxamide from 5-amino-1-(5-phospho-D-ribosyl)imidazole-4-carboxylate: step 1/2. The chain is Phosphoribosylaminoimidazole-succinocarboxamide synthase from Desulfosudis oleivorans (strain DSM 6200 / JCM 39069 / Hxd3) (Desulfococcus oleovorans).